The sequence spans 51 residues: Large ribosomal subunit protein bL33 (51 aa).

Belongs to the bacterial ribosomal protein bL33 family.

The polypeptide is Large ribosomal subunit protein bL33 (Pseudomonas putida (strain ATCC 47054 / DSM 6125 / CFBP 8728 / NCIMB 11950 / KT2440)).